We begin with the raw amino-acid sequence, 253 residues long: Ribosomal RNA small subunit methyltransferase J (253 aa).

Residues Arg98–Asp99, Glu114–Arg115, Ser150–Ser151, and Asp172 each bind S-adenosyl-L-methionine.

This sequence belongs to the methyltransferase superfamily. RsmJ family.

It is found in the cytoplasm. The catalysed reaction is guanosine(1516) in 16S rRNA + S-adenosyl-L-methionine = N(2)-methylguanosine(1516) in 16S rRNA + S-adenosyl-L-homocysteine + H(+). Specifically methylates the guanosine in position 1516 of 16S rRNA. The sequence is that of Ribosomal RNA small subunit methyltransferase J from Shewanella pealeana (strain ATCC 700345 / ANG-SQ1).